Reading from the N-terminus, the 435-residue chain is Divergent protein kinase domain 2B (435 aa).

The signal sequence occupies residues 1 to 33 (MESQWRGAAATAFHQHWLARLLLWVSTLSCSFS). N-linked (GlcNAc...) asparagine glycosylation is found at Asn102 and Asn395.

Belongs to the DIPK family.

The protein localises to the secreted. This Mus musculus (Mouse) protein is Divergent protein kinase domain 2B (Dipk2b).